The primary structure comprises 436 residues: Protein translocase subunit SecY (436 aa).

The next 10 helical transmembrane spans lie at 18 to 38 (IAFT…PATG), 69 to 89 (LLQV…SIIV), 116 to 138 (YTRY…LART), 154 to 174 (ILTV…VMWF), 187 to 207 (MSLL…GQVV), 214 to 234 (VFAI…FVEE), 266 to 286 (MANV…GILI), 314 to 334 (PVYM…YVSI), 375 to 395 (VVGA…FAVI), and 396 to 416 (GTSQ…GVGL).

The protein belongs to the SecY/SEC61-alpha family. Component of the Sec protein translocase complex. Heterotrimer consisting of SecY, SecE and SecG subunits. The heterotrimers can form oligomers, although 1 heterotrimer is thought to be able to translocate proteins. Interacts with the ribosome. Interacts with SecDF, and other proteins may be involved. Interacts with SecA.

The protein resides in the cell membrane. Functionally, the central subunit of the protein translocation channel SecYEG. Consists of two halves formed by TMs 1-5 and 6-10. These two domains form a lateral gate at the front which open onto the bilayer between TMs 2 and 7, and are clamped together by SecE at the back. The channel is closed by both a pore ring composed of hydrophobic SecY resides and a short helix (helix 2A) on the extracellular side of the membrane which forms a plug. The plug probably moves laterally to allow the channel to open. The ring and the pore may move independently. This chain is Protein translocase subunit SecY, found in Micrococcus luteus (Micrococcus lysodeikticus).